Reading from the N-terminus, the 609-residue chain is Nuclear factor 7, brain (609 aa).

The region spanning 21–75 is the Tudor-knot domain; that stretch reads NVGSTYPCKRSDGSQHDAEIVKVRYNKQAGREEYYAHYVGLNRRQNEWVDKSRLV. Residues 74–84 show a composition bias toward basic and acidic residues; that stretch reads LVLTKPPKEGE. The tract at residues 74–129 is disordered; it reads LVLTKPPKEGETNGTDQEVTDTAEQPDSKTPQKRKIEEPEPEPKKAKVEEKDASKN. Residues 85–102 are compositionally biased toward polar residues; it reads TNGTDQEVTDTAEQPDSK. Thr103 carries the post-translational modification Phosphothreonine; by CDK1. Positions 107–127 are enriched in basic and acidic residues; that stretch reads RKIEEPEPEPKKAKVEEKDAS. The segment at 145 to 185 adopts an RING-type zinc-finger fold; it reads CPLCVELFKDPVMVACGHNFCRSCIDKAWEGQSSFACPECR. The B box-type zinc finger occupies 219–260; sequence RPLEKCSEHDERLKLYCKDDGTLSCVICRDSLKHASHNFLPI. The Zn(2+) site is built by Cys224, His227, Cys246, and His252. The stretch at 278–371 forms a coiled coil; the sequence is LEASLKVTEQ…SLAKERMEDT (94 aa). Residues 413–609 enclose the B30.2/SPRY domain; the sequence is GPIQYIMWKE…VDPLRFVHNK (197 aa).

As to quaternary structure, monomer. Threonine (predominantly) and serine residues are phosphorylated during oocyte maturation, when CDK1 is active. In terms of tissue distribution, at the neurula stage, high expression in dorsal embryo region including neural folds and somites. Also high expression in adult brain (CNS) and low expression in oocytes.

The protein localises to the nucleus. In terms of biological role, transcription factor that determines dorsal-ventral body axis. The sequence is that of Nuclear factor 7, brain from Xenopus laevis (African clawed frog).